Consider the following 100-residue polypeptide: Urease subunit gamma (100 aa).

It belongs to the urease gamma subunit family. Heterotrimer of UreA (gamma), UreB (beta) and UreC (alpha) subunits. Three heterotrimers associate to form the active enzyme.

Its subcellular location is the cytoplasm. The catalysed reaction is urea + 2 H2O + H(+) = hydrogencarbonate + 2 NH4(+). It participates in nitrogen metabolism; urea degradation; CO(2) and NH(3) from urea (urease route): step 1/1. This chain is Urease subunit gamma, found in Corynebacterium efficiens (strain DSM 44549 / YS-314 / AJ 12310 / JCM 11189 / NBRC 100395).